A 268-amino-acid polypeptide reads, in one-letter code: MLLAVDIGNTNITAGLFLEDELICMWRMASNRAETWDEYGLQLIQLLERDGHTPADITCAAMASVVPPLNPVLSRAVQQYLKVQLKELTGDLRSLPAVRYDNPAALGTDRLVNALAGWEIYGRPQGRPVIVVDFGTATKLECVSAEGEYLGGVIAPGIRTAAEALTRRTALLQRVEIQRPKSVIGRNIAASMQSGILYGFAGLADGLVRRLTQEIAPDGPDPVVVATGGLASMVAVESRTIQMVDPHLTLQGIRLMYELNWPDAAAEA.

Residue 6-13 (DIGNTNIT) coordinates ATP. Residues Tyr100 and 107-110 (GTDR) each bind substrate. The active-site Proton acceptor is Asp109. Asp133 is a binding site for K(+). Thr136 serves as a coordination point for ATP.

Belongs to the type III pantothenate kinase family. Homodimer. NH4(+) is required as a cofactor. The cofactor is K(+).

The protein resides in the cytoplasm. It catalyses the reaction (R)-pantothenate + ATP = (R)-4'-phosphopantothenate + ADP + H(+). The protein operates within cofactor biosynthesis; coenzyme A biosynthesis; CoA from (R)-pantothenate: step 1/5. In terms of biological role, catalyzes the phosphorylation of pantothenate (Pan), the first step in CoA biosynthesis. The sequence is that of Type III pantothenate kinase 1 from Symbiobacterium thermophilum (strain DSM 24528 / JCM 14929 / IAM 14863 / T).